The chain runs to 315 residues: Lamassu protein LmuA (315 aa).

Functionally, component of antiviral defense system Lamassu type I, composed of LmuA and LmuB. Expression of Lamassu type I in B.subtilis (strain BEST7003) confers resistance to phages phi3T, SpBeta and SPR. This chain is Lamassu protein LmuA, found in Bacillus sp. (strain NCIM 5461 / CCTCC AB 2011126 / NIO-1130).